The following is a 468-amino-acid chain: Soluble pyridine nucleotide transhydrogenase (468 aa).

Glu-36–Cys-45 contacts FAD.

This sequence belongs to the class-I pyridine nucleotide-disulfide oxidoreductase family. FAD is required as a cofactor.

It is found in the cytoplasm. The enzyme catalyses NAD(+) + NADPH = NADH + NADP(+). Its function is as follows. Conversion of NADPH, generated by peripheral catabolic pathways, to NADH, which can enter the respiratory chain for energy generation. In Hamiltonella defensa subsp. Acyrthosiphon pisum (strain 5AT), this protein is Soluble pyridine nucleotide transhydrogenase.